Here is a 1620-residue protein sequence, read N- to C-terminus: uncharacterized protein (1620 aa).

In terms of domain architecture, Ubiquitin-like spans 21–96; sequence IRVTLKTLDD…VHLVDRGPSG (76 aa). 6 disordered regions span residues 621-648, 791-810, 842-874, 950-1016, 1219-1260, and 1537-1620; these read VATT…GTSR, TASS…SQSD, RQFL…SEDA, QVVS…NPGH, RVPG…ADPR, and IAST…NNIQ. A compositionally biased stretch (acidic residues) spans 799 to 810; that stretch reads ESVDGVEESQSD. Positions 852–871 are enriched in polar residues; it reads PSTSSAPSTSENPPGPSFNS. A compositionally biased stretch (polar residues) spans 1225–1242; that stretch reads ATRNASQNTTSVNQSTET. Composition is skewed to low complexity over residues 1537–1556 and 1583–1620; these read IAST…TVST and TSLS…NNIQ.

This is an uncharacterized protein from Caenorhabditis elegans.